Consider the following 151-residue polypeptide: MKVILKETIDTLGIVGTEWDVAPGYARNYLFPQGKAIEATPQNRKIIQQAKAKFDLQIAKERKLAQEMAERLKNVECTIKAKVHEEFRLYGSITSHDIKDALNAQNIILERRTILLPEPIRETGEYKVPIRLYKDVEPEITVKVVPEEKTQ.

This sequence belongs to the bacterial ribosomal protein bL9 family.

In terms of biological role, binds to the 23S rRNA. The sequence is that of Large ribosomal subunit protein bL9 from Desulforapulum autotrophicum (strain ATCC 43914 / DSM 3382 / VKM B-1955 / HRM2) (Desulfobacterium autotrophicum).